Consider the following 276-residue polypeptide: Dermonecrotic toxin LlSicTox-alphaIV1ii (276 aa).

The active site involves histidine 5. Mg(2+)-binding residues include glutamate 25 and aspartate 27. Residue histidine 41 is the Nucleophile of the active site. Disulfide bonds link cysteine 45/cysteine 51 and cysteine 47/cysteine 193. Residue aspartate 85 coordinates Mg(2+).

The protein belongs to the arthropod phospholipase D family. Class II subfamily. The cofactor is Mg(2+). As to expression, expressed by the venom gland.

It localises to the secreted. It carries out the reaction an N-(acyl)-sphingosylphosphocholine = an N-(acyl)-sphingosyl-1,3-cyclic phosphate + choline. It catalyses the reaction an N-(acyl)-sphingosylphosphoethanolamine = an N-(acyl)-sphingosyl-1,3-cyclic phosphate + ethanolamine. The enzyme catalyses a 1-acyl-sn-glycero-3-phosphocholine = a 1-acyl-sn-glycero-2,3-cyclic phosphate + choline. The catalysed reaction is a 1-acyl-sn-glycero-3-phosphoethanolamine = a 1-acyl-sn-glycero-2,3-cyclic phosphate + ethanolamine. Functionally, dermonecrotic toxins cleave the phosphodiester linkage between the phosphate and headgroup of certain phospholipids (sphingolipid and lysolipid substrates), forming an alcohol (often choline) and a cyclic phosphate. This toxin acts on sphingomyelin (SM). It may also act on ceramide phosphoethanolamine (CPE), lysophosphatidylcholine (LPC) and lysophosphatidylethanolamine (LPE), but not on lysophosphatidylserine (LPS), and lysophosphatidylglycerol (LPG). It acts by transphosphatidylation, releasing exclusively cyclic phosphate products as second products. Induces dermonecrosis, hemolysis, increased vascular permeability, edema, inflammatory response, and platelet aggregation. The polypeptide is Dermonecrotic toxin LlSicTox-alphaIV1ii (Loxosceles laeta (South American recluse spider)).